A 209-amino-acid chain; its full sequence is MTLHTAELKQGLAQLALELTEPQVELLQRYLALLVKWNQTYNLTAIRQEERMVSYHLLDSLSLVPHLAGGTRMLDVGSGGGMPGIPTAIARPDLQVALLDSNHKKTTFLRQVVLELGLPNVQVVTDRVEAYQPEQKFDRITSRAFSELSEFVKLTRHLMADDGQYVAMKGVYPYEEIALLPQGVAVSEVLPVTVPGLDAERHLVRMVLQ.

S-adenosyl-L-methionine-binding positions include Gly-77, Met-82, 128 to 129, and Arg-143; that span reads VE.

Belongs to the methyltransferase superfamily. RNA methyltransferase RsmG family.

Its subcellular location is the cytoplasm. The catalysed reaction is guanosine(527) in 16S rRNA + S-adenosyl-L-methionine = N(7)-methylguanosine(527) in 16S rRNA + S-adenosyl-L-homocysteine. In terms of biological role, specifically methylates the N7 position of guanine in position 527 of 16S rRNA. This chain is Ribosomal RNA small subunit methyltransferase G, found in Chromobacterium violaceum (strain ATCC 12472 / DSM 30191 / JCM 1249 / CCUG 213 / NBRC 12614 / NCIMB 9131 / NCTC 9757 / MK).